We begin with the raw amino-acid sequence, 494 residues long: Fumarate hydratase, mitochondrial (494 aa).

The transit peptide at 1–15 (MLRASATRFLSQAKN) directs the protein to the mitochondrion. Substrate-binding positions include 128–130 (SGT), 159–162 (HPND), 169–171 (SSN), and Thr217. The active-site Proton donor/acceptor is the His218. Ser348 is a catalytic residue. Residues Ser349 and 354-356 (KVN) contribute to the substrate site.

The protein belongs to the class-II fumarase/aspartase family. Fumarase subfamily. As to quaternary structure, homotetramer.

It is found in the mitochondrion matrix. The protein localises to the cytoplasm. It localises to the nucleus. It catalyses the reaction (S)-malate = fumarate + H2O. Its pathway is carbohydrate metabolism; tricarboxylic acid cycle; (S)-malate from fumarate: step 1/1. Its function is as follows. Catalyzes the reversible stereospecific interconversion of fumarate to L-malate. In mitochondrion, catalyzes the hydration of fumarate to L-malate in the tricarboxylic acid (TCA) cycle to facilitate a transition step in the production of energy in the form of NADH. In cytoplasm and nucleus, involved in DNA repair in response to DNA damage: following DNA double-strand breaks (DSBs), translocates from the cytosol to the nucleus and promotes DNA repair by catalyzing the dehydration of L-malate to fumarate. This chain is Fumarate hydratase, mitochondrial, found in Rhizopus oryzae (Mucormycosis agent).